The chain runs to 142 residues: Transcriptional regulator MraZ (142 aa).

2 SpoVT-AbrB domains span residues 5–51 (ASAL…PRPE) and 77–120 (AADV…DAAT).

The protein belongs to the MraZ family. Forms oligomers.

It localises to the cytoplasm. The protein localises to the nucleoid. This is Transcriptional regulator MraZ from Ralstonia nicotianae (strain ATCC BAA-1114 / GMI1000) (Ralstonia solanacearum).